A 345-amino-acid polypeptide reads, in one-letter code: Uroporphyrinogen decarboxylase (345 aa).

Residues 27-31 (RQAGR), Phe-46, Asp-76, Tyr-152, Ser-207, and His-321 each bind substrate.

The protein belongs to the uroporphyrinogen decarboxylase family. In terms of assembly, homodimer.

The protein resides in the cytoplasm. It catalyses the reaction uroporphyrinogen III + 4 H(+) = coproporphyrinogen III + 4 CO2. It functions in the pathway porphyrin-containing compound metabolism; protoporphyrin-IX biosynthesis; coproporphyrinogen-III from 5-aminolevulinate: step 4/4. Functionally, catalyzes the decarboxylation of four acetate groups of uroporphyrinogen-III to yield coproporphyrinogen-III. The protein is Uroporphyrinogen decarboxylase of Staphylococcus aureus (strain bovine RF122 / ET3-1).